The following is a 415-amino-acid chain: Phosphoglycerate transport system transcriptional regulatory protein PgtA (415 aa).

Residues 7 to 121 (SILLIDDDVD…KLLILIEDAL (115 aa)) enclose the Response regulatory domain. Residue aspartate 56 is modified to 4-aspartylphosphate. One can recognise a Sigma-54 factor interaction domain in the interval 142-341 (LIGRSEWMNQ…LANAAELFAV (200 aa)). 170 to 177 (GEHGTGRM) provides a ligand contact to ATP. The segment at residues 385–404 (INEVAEYLQIPRKKLYLRMK) is a DNA-binding region (H-T-H motif).

Post-translationally, phosphorylated by PgtB.

It is found in the cytoplasm. Its function is as follows. Member of the two-component regulatory system PgtB/PgtA that regulates the inducible phosphoglycerate transport system. When activated by PgtB it acts in conjunction with sigma-54 as a transcriptional activator. This Salmonella typhimurium (strain LT2 / SGSC1412 / ATCC 700720) protein is Phosphoglycerate transport system transcriptional regulatory protein PgtA (pgtA).